A 585-amino-acid chain; its full sequence is Aspartate--tRNA ligase (585 aa).

Glu-173 contacts L-aspartate. The segment at 197–200 (QTLK) is aspartate. Arg-219 is an L-aspartate binding site. ATP-binding positions include 219–221 (RDE) and Gln-228. His-446 lines the L-aspartate pocket. Glu-480 is a binding site for ATP. Arg-487 contacts L-aspartate. 532–535 (GLDR) serves as a coordination point for ATP.

Belongs to the class-II aminoacyl-tRNA synthetase family. Type 1 subfamily. Homodimer.

The protein resides in the cytoplasm. It carries out the reaction tRNA(Asp) + L-aspartate + ATP = L-aspartyl-tRNA(Asp) + AMP + diphosphate. In terms of biological role, catalyzes the attachment of L-aspartate to tRNA(Asp) in a two-step reaction: L-aspartate is first activated by ATP to form Asp-AMP and then transferred to the acceptor end of tRNA(Asp). In Bacteroides fragilis (strain ATCC 25285 / DSM 2151 / CCUG 4856 / JCM 11019 / LMG 10263 / NCTC 9343 / Onslow / VPI 2553 / EN-2), this protein is Aspartate--tRNA ligase.